The following is a 736-amino-acid chain: Catalase-peroxidase (736 aa).

Positions 100 to 223 (WHSAGTYRIG…LAAVQMGLIY (124 aa)) form a cross-link, tryptophyl-tyrosyl-methioninium (Trp-Tyr) (with M-249). His101 serves as the catalytic Proton acceptor. Positions 223-249 (YVNPEGPDGKPDPVAAARDIRETFRRM) form a cross-link, tryptophyl-tyrosyl-methioninium (Tyr-Met) (with W-100). His264 contributes to the heme b binding site.

It belongs to the peroxidase family. Peroxidase/catalase subfamily. In terms of assembly, homodimer or homotetramer. Requires heme b as cofactor. In terms of processing, formation of the three residue Trp-Tyr-Met cross-link is important for the catalase, but not the peroxidase activity of the enzyme.

The catalysed reaction is H2O2 + AH2 = A + 2 H2O. The enzyme catalyses 2 H2O2 = O2 + 2 H2O. Its function is as follows. Bifunctional enzyme with both catalase and broad-spectrum peroxidase activity. This Geobacillus kaustophilus (strain HTA426) protein is Catalase-peroxidase.